Reading from the N-terminus, the 301-residue chain is Inosose dehydratase (301 aa).

This sequence belongs to the IolE/MocC family. Requires glutathione as cofactor. Co(2+) is required as a cofactor. It depends on Mn(2+) as a cofactor.

It catalyses the reaction scyllo-inosose = 3D-3,5/4-trihydroxycyclohexane-1,2-dione + H2O. It functions in the pathway polyol metabolism; myo-inositol degradation into acetyl-CoA; acetyl-CoA from myo-inositol: step 2/7. Functionally, catalyzes the dehydration of inosose (2-keto-myo-inositol, 2KMI or 2,4,6/3,5-pentahydroxycyclohexanone) to 3D-(3,5/4)-trihydroxycyclohexane-1,2-dione (D-2,3-diketo-4-deoxy-epi-inositol). This is Inosose dehydratase from Lacticaseibacillus casei (strain BL23) (Lactobacillus casei).